The sequence spans 486 residues: Sensor protein PhoQ (486 aa).

Over 1-16 (MKKLLRLFFPLSLRVR) the chain is Cytoplasmic. Residues 17 to 37 (FLLATAAVVLVLSLAYGMVAL) form a helical membrane-spanning segment. The Periplasmic segment spans residues 38 to 194 (IGYSVSFDKT…LKSSYMVWSW (157 aa)). Residues Asp151 and Asp152 each coordinate a divalent metal cation. Residues 195-215 (FIYVLSANLLLVIPLLWVAAW) traverse the membrane as a helical segment. The HAMP domain maps to 215–266 (WWSLRPIEALAKEVRELEEHNRELLNPATTRELTSLVRNLNRLLKSERERYD). The Cytoplasmic portion of the chain corresponds to 216–486 (WSLRPIEALA…GRQHSAPKDE (271 aa)). The 207-residue stretch at 274–480 (DLTHSLKTPL…RMEVIFGRQH (207 aa)) folds into the Histidine kinase domain. At His277 the chain carries Phosphohistidine; by autocatalysis. Residue Asn385 participates in Mg(2+) binding. ATP contacts are provided by residues 385-393 (NVLDNACKY), 415-420 (DDGPGI), and 434-446 (RVDT…GVGL). Residue Gln442 participates in Mg(2+) binding.

Homodimer; probably dimerizes via the cytoplasmic domain. Probably interacts with MgrB in the periplasm, altering its activity and that of downstream effector PhoP.

The protein resides in the cell inner membrane. It catalyses the reaction ATP + protein L-histidine = ADP + protein N-phospho-L-histidine.. With respect to regulation, acetyl-CoA acts as a non-competitive inhibitor of the PhoQ autokinase activity. Feedback inhibited by MgrB, which seems to bind PhoQ, altering its activity and that of downstream effector PhoP. Functionally, member of the two-component regulatory system PhoP/PhoQ involved in adaptation to low Mg(2+) environments and the control of acid resistance genes. In low periplasmic Mg(2+), PhoQ functions as a membrane-associated protein kinase that undergoes autophosphorylation and subsequently transfers the phosphate to PhoP, resulting in the expression of PhoP-activated genes (PAG) and repression of PhoP-repressed genes (PRG). In high periplasmic Mg(2+), acts as a protein phosphatase that dephosphorylates phospho-PhoP, resulting in the repression of PAG and may lead to expression of some PRG. PhoP-regulated transcription is redox-sensitive, being activated when the periplasm becomes more reducing (deletion of dsbA/dsbB, or treatment with dithiothreitol). MgrB acts between DsbA/DsbB and PhoP/PhoQ in this pathway; the 2 periplasmic Cys residues of MgrB are required for its action on PhoQ, which then acts on PhoP. Mediates magnesium influx to the cytosol by activation of mgtA. Promotes expression of the two-component regulatory system rstA/rstB and transcription of the hemL, mgrB, nagA, slyB, vboR and yrbL genes. This Escherichia coli (strain K12) protein is Sensor protein PhoQ (phoQ).